Reading from the N-terminus, the 513-residue chain is Alpha-amylase mde5 (513 aa).

Residues 1-25 (MKHNEVFGWTLKVLSFLLVVIPANA) form the signal peptide. Cys-52 and Cys-60 are oxidised to a cystine. Trp-105 contributes to the substrate binding site. Position 143 (Asn-143) interacts with Ca(2+). Residue His-144 coordinates substrate. N-linked (GlcNAc...) asparagine glycosylation occurs at Asn-162. A disulfide bridge links Cys-171 with Cys-184. The Ca(2+) site is built by Glu-182 and Asp-195. A substrate-binding site is contributed by Arg-224. Positions 226, 230, and 250 each coordinate Ca(2+). Catalysis depends on Asp-226, which acts as the Nucleophile. 229–230 (KH) contributes to the substrate binding site. Residue Glu-250 is the Proton donor of the active site. Gly-254 is a binding site for substrate. Cys-260 and Cys-304 form a disulfide bridge. Position 318 (Asp-318) interacts with substrate. N-linked (GlcNAc...) asparagine glycosylation occurs at Asn-357. Arg-365 is a binding site for substrate. Cys-454 and Cys-488 are joined by a disulfide.

This sequence belongs to the glycosyl hydrolase 13 family. It depends on Ca(2+) as a cofactor.

Its subcellular location is the endoplasmic reticulum. The catalysed reaction is Endohydrolysis of (1-&gt;4)-alpha-D-glucosidic linkages in polysaccharides containing three or more (1-&gt;4)-alpha-linked D-glucose units.. The protein is Alpha-amylase mde5 (mde5) of Schizosaccharomyces pombe (strain 972 / ATCC 24843) (Fission yeast).